The sequence spans 326 residues: tRNA-modifying protein YgfZ (326 aa).

Folate is bound by residues tryptophan 27 and tryptophan 189.

It belongs to the tRNA-modifying YgfZ family.

The protein localises to the cytoplasm. In terms of biological role, folate-binding protein involved in regulating the level of ATP-DnaA and in the modification of some tRNAs. It is probably a key factor in regulatory networks that act via tRNA modification, such as initiation of chromosomal replication. In Escherichia coli O45:K1 (strain S88 / ExPEC), this protein is tRNA-modifying protein YgfZ.